A 90-amino-acid chain; its full sequence is Small ribosomal subunit protein uS15c (90 aa).

Belongs to the universal ribosomal protein uS15 family. In terms of assembly, part of the 30S ribosomal subunit.

It localises to the plastid. The protein localises to the chloroplast. The protein is Small ribosomal subunit protein uS15c (rps15-A) of Oryza nivara (Indian wild rice).